A 733-amino-acid chain; its full sequence is MELSMKKFTVRRFFSVYLRKKSRSKSSSLSRLEEEGIVKEIDISNHVKEGFEKADPSQFELLKVLGQGSYGKVFLVRKVTGSDAGQLYAMKVLKKATLKVRDRVRSKMERDILAEVNHPFIVKLHYAFQTEGKLYLILDFLRGGDLFTRLSKEVMFTEEDVKFYLAELALALDHLHGLGIIYRDLKPENILLDEEGHIKITDFGLSKEATDHDKRAYSFCGTIEYMAPEVVNRRGHTQSADWWSFGVLMFEMLTGSLPFQGKDRKETMALILKAKLGMPQFLSAEAQSLLRALFKRNPCNRLGAGVDGVEEIKRHPFFVTIDWNKLYRKEIKPPFKPAVGRPEDTFHFDPEFTARTPTDSPGVPPSANAHHLFRGFSFVASSLVQEPSQQDVPKAPIHPIVQQLHGNNIHFTDGYEIKEDIGVGSYSVCKRCVHKATDAEYAVKIIDKSKRDPSEEIEILLRYGQHPNIITLKDVYDDGKYVYLVMELMRGGELLDRILRQRCFSEREASDVLYTIARTMDYLHSQGVVHRDLKPSNILYMDESGNPESIRICDFGFAKQLRAENGLLMTPCYTANFVAPEVLKRQGYDAACDVWSLGILLYTMLAGFTPFANGPDDTPEEILARIGSGKYALSGGNWDSISDAAKDVVSKMLHVDPQQRLTAVQVLKHPWIVNREYLSQNQLSRQDVHLVKGAMAATYFALNRTPQAPRLEPVLSSSLAQRRGMKRLTSTRL.

The Protein kinase 1 domain maps to 59-318; it reads FELLKVLGQG…VEEIKRHPFF (260 aa). Residues 65-73 and Lys-91 each bind ATP; that span reads LGQGSYGKV. Asp-184 functions as the Proton acceptor in the catalytic mechanism. A Phosphoserine; by PDPK1 modification is found at Ser-218. An AGC-kinase C-terminal domain is found at 319–388; sequence VTIDWNKLYR…VASSLVQEPS (70 aa). Ser-377 bears the Phosphoserine mark. Positions 415–672 constitute a Protein kinase 2 domain; it reads YEIKEDIGVG…AVQVLKHPWI (258 aa). ATP contacts are provided by residues 421-429 and Lys-444; that span reads IGVGSYSVC. Asp-532 functions as the Proton acceptor in the catalytic mechanism.

This sequence belongs to the protein kinase superfamily. AGC Ser/Thr protein kinase family. S6 kinase subfamily. In terms of assembly, forms a complex with either MAPK1/ERK2 or MAPK3/ERK1 in quiescent cells. Transiently dissociates following mitogenic stimulation. Interacts with FBXO5; cooperate to induce the metaphase arrest of early blastomeres; increases and stabilizes interaction of FBXO5 with CDC20. Mg(2+) serves as cofactor. In terms of processing, activated by phosphorylation at Ser-218 by PDPK1. Autophosphorylated on Ser-377, as part of the activation process. May be phosphorylated at Thr-356 and Ser-360 by MAPK1/ERK2 and MAPK3/ERK1. N-terminal myristoylation results in an activated kinase in the absence of added growth factors.

The protein localises to the nucleus. It is found in the cytoplasm. The catalysed reaction is L-seryl-[protein] + ATP = O-phospho-L-seryl-[protein] + ADP + H(+). It catalyses the reaction L-threonyl-[protein] + ATP = O-phospho-L-threonyl-[protein] + ADP + H(+). Its activity is regulated as follows. Upon extracellular signal or mitogen stimulation, phosphorylated at Thr-570 in the C-terminal kinase domain (CTKD) by MAPK1/ERK2 and MAPK3/ERK1. The activated CTKD then autophosphorylates Ser-377, allowing binding of PDPK1, which in turn phosphorylates Ser-218 in the N-terminal kinase domain (NTDK) leading to the full activation of the protein and subsequent phosphorylation of the substrates by the NTKD. Serine/threonine-protein kinase that acts downstream of ERK (MAPK1/ERK2 and MAPK3/ERK1) signaling and mediates mitogenic and stress-induced activation of transcription factors, regulates translation, and mediates cellular proliferation, survival, and differentiation. May function as tumor suppressor in epithelial ovarian cancer cells. In Mus musculus (Mouse), this protein is Ribosomal protein S6 kinase alpha-2 (Rps6ka2).